A 156-amino-acid polypeptide reads, in one-letter code: Cellulose synthase operon protein D (156 aa).

It functions in the pathway glycan metabolism; bacterial cellulose biosynthesis. Its function is as follows. May have a major role in the perfection of crystallization, involved either in the pore structure itself or in the organization of the pores within the linear array of terminal synthesizing complexes (TCs). This is Cellulose synthase operon protein D (acsD) from Komagataeibacter xylinus (Gluconacetobacter xylinus).